Here is a 523-residue protein sequence, read N- to C-terminus: 2-isopropylmalate synthase (523 aa).

Residues 5–267 (VIIFDTTLRD…HTRINHQEIW (263 aa)) form the Pyruvate carboxyltransferase domain. 4 residues coordinate Mn(2+): Asp-14, His-202, His-204, and Asn-238. Positions 392 to 523 (RLDYFSVQSG…QNKENNKETV (132 aa)) are regulatory domain.

The protein belongs to the alpha-IPM synthase/homocitrate synthase family. LeuA type 1 subfamily. As to quaternary structure, homodimer. The cofactor is Mn(2+).

It is found in the cytoplasm. It catalyses the reaction 3-methyl-2-oxobutanoate + acetyl-CoA + H2O = (2S)-2-isopropylmalate + CoA + H(+). The protein operates within amino-acid biosynthesis; L-leucine biosynthesis; L-leucine from 3-methyl-2-oxobutanoate: step 1/4. Functionally, catalyzes the condensation of the acetyl group of acetyl-CoA with 3-methyl-2-oxobutanoate (2-ketoisovalerate) to form 3-carboxy-3-hydroxy-4-methylpentanoate (2-isopropylmalate). The protein is 2-isopropylmalate synthase of Citrobacter koseri (strain ATCC BAA-895 / CDC 4225-83 / SGSC4696).